The sequence spans 268 residues: Uronate dehydrogenase (268 aa).

NAD(+) contacts are provided by residues 17 to 18, 37 to 39, 55 to 56, and 75 to 79; these read GL, DIS, DL, and FGGVS. Residues S79 and 115–117 contribute to the substrate site; that span reads SNH. Catalysis depends on Y140, which acts as the Proton acceptor. K144 is a binding site for NAD(+). S169 provides a ligand contact to substrate. NAD(+) is bound at residue S170. R178 lines the substrate pocket.

This sequence belongs to the NAD(P)-dependent epimerase/dehydratase family. Homohexamer.

It carries out the reaction beta-D-galacturonate + NAD(+) = D-galactaro-1,5-lactone + NADH + H(+). It catalyses the reaction beta-D-glucuronate + NAD(+) = D-glucaro-1,5-lactone + NADH + H(+). Its pathway is carbohydrate acid metabolism; D-galacturonate degradation via prokaryotic oxidative pathway. Catalyzes the oxidation of beta-D-galacturonate and beta-D-glucuronate to galactarate and D-glucarate, respectively. The polypeptide is Uronate dehydrogenase (udh) (Pseudomonas putida (strain ATCC 47054 / DSM 6125 / CFBP 8728 / NCIMB 11950 / KT2440)).